Reading from the N-terminus, the 229-residue chain is MSKKKAFTSLLYLASIVFLPWWISLSFNKSLESWVTDWWNTRQSEIFWNDIQEKNIIKNFIELEEILLLEEMIKEDSETHLQNLRIGIHKETLQLIKIHNEDHIHTILHFSTNIICFVILSGYSILGNEELVILNSWAQEFIYNLSDTIKAFWILLLTDFFIGFHSTRGWELMIGFVYKDFGFAHNDQILSSLVCIFPVILDTLFKFWVFRYLNCVSPSLVVIYHSMNE.

The next 4 helical transmembrane spans lie at 7-27 (FTSLLYLASIVFLPWWISLSF), 114-134 (IICFVILSGYSILGNEELVIL), 145-165 (LSDTIKAFWILLLTDFFIGFH), and 189-209 (ILSSLVCIFPVILDTLFKFWV).

Belongs to the CemA family.

The protein resides in the plastid. Its subcellular location is the chloroplast inner membrane. It carries out the reaction K(+)(in) + H(+)(out) = K(+)(out) + H(+)(in). Its function is as follows. Contributes to K(+)/H(+) antiport activity by supporting proton efflux to control proton extrusion and homeostasis in chloroplasts in a light-dependent manner to modulate photosynthesis. Prevents excessive induction of non-photochemical quenching (NPQ) under continuous-light conditions. Indirectly promotes efficient inorganic carbon uptake into chloroplasts. The sequence is that of Potassium/proton antiporter CemA from Daucus carota (Wild carrot).